Reading from the N-terminus, the 544-residue chain is Sialidase (544 aa).

The signal sequence occupies residues 1–22 (MKKAVILFSLFCFLCAIPVVQA). BNR repeat units follow at residues 239–250 (SRSTDGGKTWEK), 318–329 (AKSTDDGKTWSA), and 378–389 (MYSKDGGKNWKM). Glu399 is a catalytic residue. Residue Arg415 participates in substrate binding. The stretch at 425–436 (AITKDLGKTWTE) is one BNR 4 repeat. Residue Arg479 participates in substrate binding. The stretch at 485 to 496 (KISLDGGVTWSP) is one BNR 5 repeat.

The protein belongs to the glycosyl hydrolase 33 family.

It localises to the periplasm. The catalysed reaction is Hydrolysis of alpha-(2-&gt;3)-, alpha-(2-&gt;6)-, alpha-(2-&gt;8)- glycosidic linkages of terminal sialic acid residues in oligosaccharides, glycoproteins, glycolipids, colominic acid and synthetic substrates.. Sialidases have been suggested to be pathogenic factors in microbial infections. The protein is Sialidase (nanH) of Bacteroides fragilis (strain YCH46).